We begin with the raw amino-acid sequence, 223 residues long: Ribose-5-phosphate isomerase A (223 aa).

Residues 29–32 (TGST), 82–85 (DGAD), and 95–98 (KGGG) each bind substrate. The Proton acceptor role is filled by E104. Residue K122 participates in substrate binding.

This sequence belongs to the ribose 5-phosphate isomerase family. Homodimer.

It carries out the reaction aldehydo-D-ribose 5-phosphate = D-ribulose 5-phosphate. It participates in carbohydrate degradation; pentose phosphate pathway; D-ribose 5-phosphate from D-ribulose 5-phosphate (non-oxidative stage): step 1/1. Catalyzes the reversible conversion of ribose-5-phosphate to ribulose 5-phosphate. The chain is Ribose-5-phosphate isomerase A from Neisseria meningitidis serogroup C (strain 053442).